The sequence spans 344 residues: Arginine N-succinyltransferase (344 aa).

L125 contacts succinyl-CoA. The active-site Proton donor is H229.

The protein belongs to the arginine N-succinyltransferase family.

The enzyme catalyses succinyl-CoA + L-arginine = N(2)-succinyl-L-arginine + CoA + H(+). It participates in amino-acid degradation; L-arginine degradation via AST pathway; L-glutamate and succinate from L-arginine: step 1/5. In terms of biological role, catalyzes the transfer of succinyl-CoA to arginine to produce N(2)-succinylarginine. The polypeptide is Arginine N-succinyltransferase (Shigella sonnei (strain Ss046)).